The chain runs to 361 residues: Peptide chain release factor 1 (361 aa).

N5-methylglutamine is present on Q237. Residues 286–306 (AKQDQEQAAKRKSLVGSGDRS) form a disordered region.

It belongs to the prokaryotic/mitochondrial release factor family. In terms of processing, methylated by PrmC. Methylation increases the termination efficiency of RF1.

It is found in the cytoplasm. Peptide chain release factor 1 directs the termination of translation in response to the peptide chain termination codons UAG and UAA. This chain is Peptide chain release factor 1, found in Coxiella burnetii (strain CbuG_Q212) (Coxiella burnetii (strain Q212)).